The primary structure comprises 282 residues: Methyltransferase tpcH (282 aa).

Belongs to the class I-like SAM-binding methyltransferase superfamily. In terms of tissue distribution, specifically expressed in conidia.

Its pathway is secondary metabolite biosynthesis. In terms of biological role, methyltransferase; part of the gene cluster that mediates the biosynthesis of trypacidin, a mycotoxin with antiprotozoal activity and that plays a role in the infection process. The pathway begins with the synthesis of atrochrysone thioester by the polyketide synthase (PKS) tpcC. The atrochrysone carboxyl ACP thioesterase tpcB then breaks the thioester bond and releases the atrochrysone carboxylic acid from tpcC. The decarboxylase tpcK converts atrochrysone carboxylic acid to atrochrysone which is further reduced into emodin anthrone. The next step is performed by the emodin anthrone oxygenase tpcL that catalyzes the oxidation of emodinanthrone to emodin. Emodin O-methyltransferase encoded by tpcA catalyzes methylation of the 8-hydroxy group of emodin to form questin. Ring cleavage of questin by questin oxidase tpcI leads to desmethylsulochrin via several intermediates including questin epoxide. Another methylation step catalyzed by tpcM leads to the formation of sulochrin which is further converted to monomethylsulfochrin by tpcH. Finally, the tpcJ catalyzes the conversion of monomethylsulfochrin to trypacidin. Trypacidin is toxic for human pulmonary and bronchial epithelial cells by initiating the intracellular formation of nitric oxide (NO) and hydrogen peroxide (H(2)O(2)), thus triggering host necrotic cell death. The trypacidin pathway is also able to produce endocrocin via a distinct route from the endocrocin Enc pathway. In Aspergillus fumigatus (strain ATCC MYA-4609 / CBS 101355 / FGSC A1100 / Af293) (Neosartorya fumigata), this protein is Methyltransferase tpcH.